Here is a 115-residue protein sequence, read N- to C-terminus: NAD(P)H-quinone oxidoreductase subunit M (115 aa).

Belongs to the complex I NdhM subunit family. NDH-1 can be composed of about 15 different subunits; different subcomplexes with different compositions have been identified which probably have different functions.

Its subcellular location is the cellular thylakoid membrane. It catalyses the reaction a plastoquinone + NADH + (n+1) H(+)(in) = a plastoquinol + NAD(+) + n H(+)(out). It carries out the reaction a plastoquinone + NADPH + (n+1) H(+)(in) = a plastoquinol + NADP(+) + n H(+)(out). In terms of biological role, NDH-1 shuttles electrons from an unknown electron donor, via FMN and iron-sulfur (Fe-S) centers, to quinones in the respiratory and/or the photosynthetic chain. The immediate electron acceptor for the enzyme in this species is believed to be plastoquinone. Couples the redox reaction to proton translocation, and thus conserves the redox energy in a proton gradient. Cyanobacterial NDH-1 also plays a role in inorganic carbon-concentration. The protein is NAD(P)H-quinone oxidoreductase subunit M of Synechococcus sp. (strain CC9902).